The following is a 55-amino-acid chain: MPQLNPAPWFAILVFSWLVFLTVIPPKVLGHTFTNEPTSQSTEKAKPEPWNWPWH.

The helical transmembrane segment at 4–24 (LNPAPWFAILVFSWLVFLTVI) threads the bilayer. The tract at residues 34-55 (TNEPTSQSTEKAKPEPWNWPWH) is disordered.

This sequence belongs to the ATPase protein 8 family. Component of the ATP synthase complex composed at least of ATP5F1A/subunit alpha, ATP5F1B/subunit beta, ATP5MC1/subunit c (homooctomer), MT-ATP6/subunit a, MT-ATP8/subunit 8, ATP5ME/subunit e, ATP5MF/subunit f, ATP5MG/subunit g, ATP5MK/subunit k, ATP5MJ/subunit j, ATP5F1C/subunit gamma, ATP5F1D/subunit delta, ATP5F1E/subunit epsilon, ATP5PF/subunit F6, ATP5PB/subunit b, ATP5PD/subunit d, ATP5PO/subunit OSCP. ATP synthase complex consists of a soluble F(1) head domain (subunits alpha(3) and beta(3)) - the catalytic core - and a membrane F(0) domain - the membrane proton channel (subunits c, a, 8, e, f, g, k and j). These two domains are linked by a central stalk (subunits gamma, delta, and epsilon) rotating inside the F1 region and a stationary peripheral stalk (subunits F6, b, d, and OSCP).

It is found in the mitochondrion membrane. Its function is as follows. Subunit 8, of the mitochondrial membrane ATP synthase complex (F(1)F(0) ATP synthase or Complex V) that produces ATP from ADP in the presence of a proton gradient across the membrane which is generated by electron transport complexes of the respiratory chain. ATP synthase complex consist of a soluble F(1) head domain - the catalytic core - and a membrane F(1) domain - the membrane proton channel. These two domains are linked by a central stalk rotating inside the F(1) region and a stationary peripheral stalk. During catalysis, ATP synthesis in the catalytic domain of F(1) is coupled via a rotary mechanism of the central stalk subunits to proton translocation. In vivo, can only synthesize ATP although its ATP hydrolase activity can be activated artificially in vitro. Part of the complex F(0) domain. The protein is ATP synthase F(0) complex subunit 8 of Oncorhynchus mykiss (Rainbow trout).